We begin with the raw amino-acid sequence, 185 residues long: Acireductone dioxygenase (185 aa).

Residues 1-22 are disordered; the sequence is MSRLSIHPEGSTNATSPAEPLL. His-102, His-104, Glu-108, and His-146 together coordinate Fe(2+). Residues His-102, His-104, Glu-108, and His-146 each contribute to the Ni(2+) site.

The protein belongs to the acireductone dioxygenase (ARD) family. Monomer. Fe(2+) is required as a cofactor. Ni(2+) serves as cofactor.

It catalyses the reaction 1,2-dihydroxy-5-(methylsulfanyl)pent-1-en-3-one + O2 = 3-(methylsulfanyl)propanoate + CO + formate + 2 H(+). It carries out the reaction 1,2-dihydroxy-5-(methylsulfanyl)pent-1-en-3-one + O2 = 4-methylsulfanyl-2-oxobutanoate + formate + 2 H(+). It participates in amino-acid biosynthesis; L-methionine biosynthesis via salvage pathway; L-methionine from S-methyl-5-thio-alpha-D-ribose 1-phosphate: step 5/6. Catalyzes 2 different reactions between oxygen and the acireductone 1,2-dihydroxy-3-keto-5-methylthiopentene (DHK-MTPene) depending upon the metal bound in the active site. Fe-containing acireductone dioxygenase (Fe-ARD) produces formate and 2-keto-4-methylthiobutyrate (KMTB), the alpha-ketoacid precursor of methionine in the methionine recycle pathway. Ni-containing acireductone dioxygenase (Ni-ARD) produces methylthiopropionate, carbon monoxide and formate, and does not lie on the methionine recycle pathway. The polypeptide is Acireductone dioxygenase (Prochlorococcus marinus (strain MIT 9313)).